A 226-amino-acid chain; its full sequence is Lipoprotein-releasing system ATP-binding protein LolD 1 (226 aa).

Residues 6 to 226 (LRLDKVTRSF…TLREGKVVAA (221 aa)) form the ABC transporter domain. Residue 42 to 49 (GPSGAGKS) participates in ATP binding.

The protein belongs to the ABC transporter superfamily. Lipoprotein translocase (TC 3.A.1.125) family. In terms of assembly, the complex is composed of two ATP-binding proteins (LolD) and two transmembrane proteins (LolC and LolE).

It localises to the cell inner membrane. In terms of biological role, part of the ABC transporter complex LolCDE involved in the translocation of mature outer membrane-directed lipoproteins, from the inner membrane to the periplasmic chaperone, LolA. Responsible for the formation of the LolA-lipoprotein complex in an ATP-dependent manner. The chain is Lipoprotein-releasing system ATP-binding protein LolD 1 from Rhodospirillum rubrum (strain ATCC 11170 / ATH 1.1.1 / DSM 467 / LMG 4362 / NCIMB 8255 / S1).